A 569-amino-acid polypeptide reads, in one-letter code: Glucose-6-phosphate isomerase, cytosolic 2 (569 aa).

Catalysis depends on E360, which acts as the Proton donor. Catalysis depends on residues H391 and K516.

This sequence belongs to the GPI family. As to quaternary structure, homodimer.

It is found in the cytoplasm. It carries out the reaction alpha-D-glucose 6-phosphate = beta-D-fructose 6-phosphate. It participates in carbohydrate degradation; glycolysis; D-glyceraldehyde 3-phosphate and glycerone phosphate from D-glucose: step 2/4. The polypeptide is Glucose-6-phosphate isomerase, cytosolic 2 (PGIC2) (Clarkia concinna (Red ribbons)).